Reading from the N-terminus, the 101-residue chain is NADH-quinone oxidoreductase subunit K 1 (101 aa).

3 helical membrane passes run 4–24, 31–51, and 64–84; these read IGTM…TVGV, VVIL…LVAF, and IFVM…VIAF.

It belongs to the complex I subunit 4L family. As to quaternary structure, NDH-1 is composed of 14 different subunits. Subunits NuoA, H, J, K, L, M, N constitute the membrane sector of the complex.

It is found in the cell inner membrane. The enzyme catalyses a quinone + NADH + 5 H(+)(in) = a quinol + NAD(+) + 4 H(+)(out). In terms of biological role, NDH-1 shuttles electrons from NADH, via FMN and iron-sulfur (Fe-S) centers, to quinones in the respiratory chain. The immediate electron acceptor for the enzyme in this species is believed to be ubiquinone. Couples the redox reaction to proton translocation (for every two electrons transferred, four hydrogen ions are translocated across the cytoplasmic membrane), and thus conserves the redox energy in a proton gradient. The chain is NADH-quinone oxidoreductase subunit K 1 from Koribacter versatilis (strain Ellin345).